The following is a 1115-amino-acid chain: DNA-directed RNA polymerase subunit beta (1115 aa).

Residues 1084-1115 (HEAGEGEDDEYFEEDEEAVDDEPMTFDDDDME) form a disordered region. Residues 1088 to 1115 (EGEDDEYFEEDEEAVDDEPMTFDDDDME) show a composition bias toward acidic residues.

Belongs to the RNA polymerase beta chain family. In terms of assembly, the RNAP catalytic core consists of 2 alpha, 1 beta, 1 beta' and 1 omega subunit. When a sigma factor is associated with the core the holoenzyme is formed, which can initiate transcription.

The enzyme catalyses RNA(n) + a ribonucleoside 5'-triphosphate = RNA(n+1) + diphosphate. Functionally, DNA-dependent RNA polymerase catalyzes the transcription of DNA into RNA using the four ribonucleoside triphosphates as substrates. The protein is DNA-directed RNA polymerase subunit beta of Desulfitobacterium hafniense (strain DSM 10664 / DCB-2).